The chain runs to 157 residues: MKILYPGTFDPLTNGHLDLIERAEKIFGKLVVAVLENTSKTPTFNLERRIIQIKNSLSHLPNIEVISYSGLTVDCANDLKANLILRGLRAMSDFEYELQIAHTNKSLNNDIETIFLSTNTNYSFLSSSLVKEVAKFGGEINHMVPPSVEKDLKDYFK.

T8 provides a ligand contact to substrate. Residues 8–9 and H16 each bind ATP; that span reads TF. 3 residues coordinate substrate: K40, T72, and R86. ATP-binding positions include 87–89, E97, and 122–128; these read GLR and YSFLSSS.

Belongs to the bacterial CoaD family. As to quaternary structure, homohexamer. The cofactor is Mg(2+).

Its subcellular location is the cytoplasm. The enzyme catalyses (R)-4'-phosphopantetheine + ATP + H(+) = 3'-dephospho-CoA + diphosphate. The protein operates within cofactor biosynthesis; coenzyme A biosynthesis; CoA from (R)-pantothenate: step 4/5. Functionally, reversibly transfers an adenylyl group from ATP to 4'-phosphopantetheine, yielding dephospho-CoA (dPCoA) and pyrophosphate. The polypeptide is Phosphopantetheine adenylyltransferase (Prochlorococcus marinus (strain MIT 9301)).